The sequence spans 416 residues: Phakinin (416 aa).

Residues 1-48 (MSKRRVAADLPSGTNSSMPVQRHRVSSLRGTHSPSSLDSPPASRTSAV) form a disordered region. N-acetylserine is present on serine 2. Residues 2–115 (SKRRVAADLP…HTTVEDLGGC (114 aa)) form a head region. Phosphoserine occurs at positions 27, 33, 36, and 91. A compositionally biased stretch (polar residues) spans 28–48 (LRGTHSPSSLDSPPASRTSAV). The IF rod domain maps to 105 to 416 (DHTTVEDLGG…HALLDREENN (312 aa)). Coiled coils occupy residues 116–146 (LVEY…SKAK), 170–249 (LENA…VKVL), and 308–402 (QTQE…LQKD). The segment at 397-416 (SQLQKDVASYHALLDREENN) is tail.

This sequence belongs to the intermediate filament family. As to quaternary structure, part of a complex required for lens intermediate filament formation composed of BFSP1, BFSP2 and CRYAA. Found in a complex composed of PPL (via C-terminal linker domain), BFSP1 and BFSP2 in the retinal lens. Within the complex interacts with PPL (via C-terminal linker domain) and with BFSP1. Identified in a complex that contains VIM, EZR, AHNAK, BFSP1, BFSP2, ANK2, PLEC, PRX and spectrin. Interacts with LGSN. Interacts with VIM. In terms of tissue distribution, detected in retina lens fiber cells (at protein level). Also expressed in the lens epithelium, abundantly expressed in the anterior and anterolateral epithelium, less frequently expressed nearer the lens coronal equator (at protein level).

It localises to the cell membrane. It is found in the cytoplasm. Its subcellular location is the cytoskeleton. The protein localises to the cell cortex. Functionally, required for the correct formation of lens intermediate filaments as part of a complex composed of BFSP1, BFSP2 and CRYAA. Plays a role in maintenance of retinal lens optical clarity. The sequence is that of Phakinin (Bfsp2) from Mus musculus (Mouse).